Reading from the N-terminus, the 554-residue chain is 2-succinyl-5-enolpyruvyl-6-hydroxy-3-cyclohexene-1-carboxylate synthase (554 aa).

This sequence belongs to the TPP enzyme family. MenD subfamily. In terms of assembly, homodimer. It depends on Mg(2+) as a cofactor. Requires Mn(2+) as cofactor. The cofactor is thiamine diphosphate.

It carries out the reaction isochorismate + 2-oxoglutarate + H(+) = 5-enolpyruvoyl-6-hydroxy-2-succinyl-cyclohex-3-ene-1-carboxylate + CO2. It functions in the pathway quinol/quinone metabolism; 1,4-dihydroxy-2-naphthoate biosynthesis; 1,4-dihydroxy-2-naphthoate from chorismate: step 2/7. It participates in quinol/quinone metabolism; menaquinone biosynthesis. Its function is as follows. Catalyzes the thiamine diphosphate-dependent decarboxylation of 2-oxoglutarate and the subsequent addition of the resulting succinic semialdehyde-thiamine pyrophosphate anion to isochorismate to yield 2-succinyl-5-enolpyruvyl-6-hydroxy-3-cyclohexene-1-carboxylate (SEPHCHC). This chain is 2-succinyl-5-enolpyruvyl-6-hydroxy-3-cyclohexene-1-carboxylate synthase, found in Mycobacterium tuberculosis (strain ATCC 25177 / H37Ra).